The sequence spans 1007 residues: Serine/threonine-protein kinase atg1 (1007 aa).

The Protein kinase domain maps to 30 to 336; sequence YTRLSEIGRG…FDVYFAHKVL (307 aa). ATP-binding positions include 36 to 44 and Lys-59; that span reads IGRGSFAVV. Asp-174 serves as the catalytic Proton acceptor. Disordered regions lie at residues 343–489, 524–586, 795–817, and 878–900; these read LVAD…KEHA, GGQA…PTSA, RLPS…GSGT, and SRPG…DGGQ. Positions 373 to 387 are enriched in basic and acidic residues; that stretch reads MKRENALSGGVRDEP. The span at 396-410 shows a compositional bias: polar residues; that stretch reads AMTQSPRPETPSTPM. Basic and acidic residues predominate over residues 477–489; the sequence is KPVEKAKDEKEHA. A compositionally biased stretch (low complexity) spans 534 to 555; that stretch reads SGAAPGTPPAGGSSPHASPSKA. A compositionally biased stretch (basic and acidic residues) spans 563–579; it reads SRADSAHVRQNSYDRRY. The segment covering 805-817 has biased composition (low complexity); the sequence is SNLSVGSSLGSGT. Over residues 887-896 the composition is skewed to basic and acidic residues; that stretch reads DRADARRDNE.

This sequence belongs to the protein kinase superfamily. Ser/Thr protein kinase family. APG1/unc-51/ULK1 subfamily. As to quaternary structure, homodimer. Forms a ternary complex with ATG13 and ATG17.

The protein resides in the cytoplasm. The protein localises to the preautophagosomal structure membrane. The catalysed reaction is L-seryl-[protein] + ATP = O-phospho-L-seryl-[protein] + ADP + H(+). It carries out the reaction L-threonyl-[protein] + ATP = O-phospho-L-threonyl-[protein] + ADP + H(+). In terms of biological role, serine/threonine protein kinase involved in the cytoplasm to vacuole transport (Cvt) and found to be essential in autophagy, where it is required for the formation of autophagosomes. Involved in the clearance of protein aggregates which cannot be efficiently cleared by the proteasome. Required for selective autophagic degradation of the nucleus (nucleophagy) as well as for mitophagy which contributes to regulate mitochondrial quantity and quality by eliminating the mitochondria to a basal level to fulfill cellular energy requirements and preventing excess ROS production. Also involved in endoplasmic reticulum-specific autophagic process, in selective removal of ER-associated degradation (ERAD) substrates. Plays a key role in ATG9 and ATG23 cycling through the pre-autophagosomal structure and is necessary to promote ATG18 binding to ATG9 through phosphorylation of ATG9. Catalyzes phosphorylation of ATG4, decreasing the interaction between ATG4 and ATG8 and impairing deconjugation of PE-conjugated forms of ATG8. The polypeptide is Serine/threonine-protein kinase atg1 (Aspergillus niger (strain ATCC MYA-4892 / CBS 513.88 / FGSC A1513)).